Reading from the N-terminus, the 353-residue chain is MESEGWPALQPLLCFAWIAATLPIIAAALPIPTAVGGHLLRRLLSAFSSRGKTVRPSPASSSGSSSSKAKFTVPQKYFMHFYVVGVLATTILLLAIWFYAYMKLTPLLLESSSYSTIFSHLVGSNSFSFGRVRSRTMGHKYRVWRTVFALLLMEVQVLRRLYETEHVFHYSPARMHIVGYLTGLFYYVAAPLSLASSCIPEAAEYFQGQVPEFVVKGRARMPDLVIDSSSLLQPLLKLGWTQWIGAVIFIWGSLHQIRCHAILGSLREHKDYDEYVIPCGDCFNRVSCPHYLAELVIYFGMLVASGAEDIPVWFLFIFVITNLSFAAVETYNWYLQKFEDYPRSRYAIIPFVC.

Helical transmembrane passes span 11 to 31, 78 to 98, 175 to 195, 234 to 254, 291 to 308, and 313 to 335; these read PLLCFAWIAATLPIIAAALPI, FMHFYVVGVLATTILLLAIWF, MHIVGYLTGLFYYVAAPLSLA, PLLKLGWTQWIGAVIFIWGSL, YLAELVIYFGMLVASGAE, and WFLFIFVITNLSFAAVETYNWYL.

Belongs to the steroid 5-alpha reductase family. Polyprenal reductase subfamily.

The protein localises to the cell membrane. The catalysed reaction is a di-trans,poly-cis-dolichal + NADP(+) = a di-trans,poly-cis-polyprenal + NADPH + H(+). Its pathway is protein modification; protein glycosylation. In terms of biological role, plays a key role in early steps of protein N-linked glycosylation by being involved in the conversion of polyprenol into dolichol. Acts as a polyprenal reductase that mediates the reduction of polyprenal into dolichal in a NADP-dependent mechanism. Dolichols are required for the synthesis of dolichol-linked monosaccharides and the oligosaccharide precursor used for N-glycosylation. The chain is Polyprenal reductase 2 from Oryza sativa subsp. japonica (Rice).